The primary structure comprises 96 residues: Nucleoid-associated protein CF0672 (96 aa).

It belongs to the YbaB/EbfC family. As to quaternary structure, homodimer.

It is found in the cytoplasm. Its subcellular location is the nucleoid. Binds to DNA and alters its conformation. May be involved in regulation of gene expression, nucleoid organization and DNA protection. This chain is Nucleoid-associated protein CF0672, found in Chlamydia felis (strain Fe/C-56) (Chlamydophila felis).